Here is a 95-residue protein sequence, read N- to C-terminus: Large ribosomal subunit protein bL27 (95 aa).

Residues Met-1–Phe-6 constitute a propeptide that is removed on maturation.

The protein belongs to the bacterial ribosomal protein bL27 family. The N-terminus is cleaved by ribosomal processing cysteine protease Prp.

The protein is Large ribosomal subunit protein bL27 of Caldanaerobacter subterraneus subsp. tengcongensis (strain DSM 15242 / JCM 11007 / NBRC 100824 / MB4) (Thermoanaerobacter tengcongensis).